The sequence spans 157 residues: Ribosomal RNA large subunit methyltransferase H (157 aa).

S-adenosyl-L-methionine contacts are provided by residues leucine 73, glycine 105, and 124-129; that span reads MSKMTF.

This sequence belongs to the RNA methyltransferase RlmH family. As to quaternary structure, homodimer.

The protein resides in the cytoplasm. The enzyme catalyses pseudouridine(1915) in 23S rRNA + S-adenosyl-L-methionine = N(3)-methylpseudouridine(1915) in 23S rRNA + S-adenosyl-L-homocysteine + H(+). Its function is as follows. Specifically methylates the pseudouridine at position 1915 (m3Psi1915) in 23S rRNA. The chain is Ribosomal RNA large subunit methyltransferase H from Bacteroides thetaiotaomicron (strain ATCC 29148 / DSM 2079 / JCM 5827 / CCUG 10774 / NCTC 10582 / VPI-5482 / E50).